Here is a 553-residue protein sequence, read N- to C-terminus: MSTSRLQQQFIRLWQRYNGQSTETTLQALAEVLNCSRRHVRSLLGKMQHAGWLDWQAEAGRGKRSQLIFLRSGLALQQQRAEELLEQDHIDQLVQLVGDKKAVRQMLLSQLGRSFRQGKHILRVLYYRPLENLLPGTALRRSETHMVRQIFNGLTRINEENGELEPDLSHHWQAITPLHWRFYLRPAIHFHHGRELEMSDVISSLTRLIPQPLFSHIAEVRSPTPYVIDVYLHSPDHWLPWLLGSVHAMILPQEWETQPDFHRQPIGTGPYSVIRNHHSQLKIQAFDNYFGFRALIDEVNIWVLPELSEELVYSGVQLQADDTGKNELESRLEEGCYFLLFDQRSPQACTPEIRRWLCELITPIALLSHAAPFYQRYWSPAYGMLPRWHHNRLTTQEPKPEGLNELTLTFYSEHSEFDAISQTLTQLLAAQGVTLKIQVLDYTRWYQGDAQSDIWLGSANFYLPLEFSLFATLYEMPLLQHCLSEELHQDIESWRNNTLLMADWSQRLVSQHQFHPLFHHWLELYGQHSMRGVRMNTLGWFDFKSAWFTPPEA.

Positions 1–113 (MSTSRLQQQF…RQMLLSQLGR (113 aa)) constitute an HTH marR-type domain. Residues 26 to 49 (LQALAEVLNCSRRHVRSLLGKMQH) constitute a DNA-binding region (H-T-H motif). The solute-binding stretch occupies residues 163–494 (ELEPDLSHHW…EELHQDIESW (332 aa)).

Functionally, activates the small RNA gene sgrS under glucose-phosphate stress conditions as well as yfdZ. Represses its own transcription under both stress and non-stress conditions. Might act as a sensor of the intracellular accumulation of phosphoglucose by binding these molecules in its C-terminal solute-binding domain. This Yersinia pestis bv. Antiqua (strain Antiqua) protein is HTH-type transcriptional regulator SgrR.